A 149-amino-acid chain; its full sequence is Arginine repressor (149 aa).

Belongs to the ArgR family.

The protein resides in the cytoplasm. It functions in the pathway amino-acid biosynthesis; L-arginine biosynthesis [regulation]. Functionally, regulates arginine biosynthesis genes. In Halalkalibacterium halodurans (strain ATCC BAA-125 / DSM 18197 / FERM 7344 / JCM 9153 / C-125) (Bacillus halodurans), this protein is Arginine repressor.